A 181-amino-acid polypeptide reads, in one-letter code: Transcription termination/antitermination protein NusG (181 aa).

The 32-residue stretch at 130–161 (PGELVRVSDGPFADFNGVVEEVDYEKSRLKVS) folds into the KOW domain.

Belongs to the NusG family. As to quaternary structure, monomer. Interacts with the transcription termination factor Rho and with RNA polymerase.

Participates in transcription elongation, termination and antitermination. In the absence of Rho, increases the rate of transcription elongation by the RNA polymerase (RNAP), probably by partially suppressing pausing. In the presence of Rho, modulates most Rho-dependent termination events by interacting with the RNAP to render the complex more susceptible to the termination activity of Rho. May be required to overcome a kinetic limitation of Rho to function at certain terminators. Also involved in ribosomal RNA transcriptional antitermination. In Yersinia pestis, this protein is Transcription termination/antitermination protein NusG.